A 210-amino-acid chain; its full sequence is Large ribosomal subunit protein uL3 (210 aa).

The tract at residues 126-152 is disordered; it reads HGFRGGPKTHGQSDRHRAPGSIGAGTT.

The protein belongs to the universal ribosomal protein uL3 family. In terms of assembly, part of the 50S ribosomal subunit. Forms a cluster with proteins L14 and L19.

Functionally, one of the primary rRNA binding proteins, it binds directly near the 3'-end of the 23S rRNA, where it nucleates assembly of the 50S subunit. The chain is Large ribosomal subunit protein uL3 from Chloroflexus aurantiacus (strain ATCC 29366 / DSM 635 / J-10-fl).